The primary structure comprises 479 residues: MTDAKRAQALDLSLANKVADMALADFGHKEMQLSEREVPGLMELIRMYGVSKPLKGLRVTGSLHMTIQTAMLIKTLYELGADIRWASCNIFSTQDHAAAAIADSGMAKVFAWKGETLEDYWWCTEMALTWPDGSGPDLLVDDGGDATLMIHKGVEVENNPELLKQAYDNKEFQIIMDRLALAYQNDPGRWQRVAARVRGVSEETTTGVHRLYQLEQEGKLLFPAINVNDSVTKSKFDNLYGCRESLADGIKRATDVMVAGKVVVVAGYGDVGKGCAQSMRGFGARVLVTEIDPICALQAAMEGYEVTTMEKAVEEGDIFVTATGNYKVITGEHMEAMKDEAIVCNIGHFDNEIDMHYLETTPGCTCLNIKPQVDKWTLKSGRSIIVLAEGRLVNLGCATGHPSFVMSNSFTNQTLAQIELATNPDLERKVYILPKKLDEQVARLHLARLGVTLTTLTKEQADYIGVPVDGPYKPGHYRY.

Thr66, Asp142, and Glu203 together coordinate substrate. Residue 204–206 coordinates NAD(+); that stretch reads TTT. Residues Lys233 and Asp237 each contribute to the substrate site. Residues Asn238, 267 to 272, Glu290, Asn325, 346 to 348, and Asn394 contribute to the NAD(+) site; these read GYGDVG and IGH.

Belongs to the adenosylhomocysteinase family. It depends on NAD(+) as a cofactor.

It localises to the cytoplasm. It carries out the reaction S-adenosyl-L-homocysteine + H2O = L-homocysteine + adenosine. The protein operates within amino-acid biosynthesis; L-homocysteine biosynthesis; L-homocysteine from S-adenosyl-L-homocysteine: step 1/1. Its function is as follows. May play a key role in the regulation of the intracellular concentration of adenosylhomocysteine. This Nitratidesulfovibrio vulgaris (strain DSM 19637 / Miyazaki F) (Desulfovibrio vulgaris) protein is Adenosylhomocysteinase.